A 130-amino-acid chain; its full sequence is Small ribosomal subunit protein uS8 (130 aa).

This sequence belongs to the universal ribosomal protein uS8 family. In terms of assembly, part of the 30S ribosomal subunit. Contacts proteins S5 and S12.

One of the primary rRNA binding proteins, it binds directly to 16S rRNA central domain where it helps coordinate assembly of the platform of the 30S subunit. This is Small ribosomal subunit protein uS8 from Psychromonas ingrahamii (strain DSM 17664 / CCUG 51855 / 37).